Here is a 343-residue protein sequence, read N- to C-terminus: Zinc finger protein Gfi-1b (343 aa).

A mediates repression of transcription region spans residues 1 to 20 (MPRSFLVKSKKTHTYNQHRY). The tract at residues 1 to 20 (MPRSFLVKSKKTHTYNQHRY) is SNAG domain. Residues 51 to 77 (STDPTEKQHTPENVITEEARSDPGDPR) form a disordered region. Residues 67 to 77 (EEARSDPGDPR) are compositionally biased toward basic and acidic residues. 6 C2H2-type zinc fingers span residues 176–199 (YHCVKCSKVFSTSHGLEVHVRRSH), 205–227 (FVCNICGKSFGHAVSLEQHLNVH), 233–255 (FECKMCGKTFKRSSTLSTHLLIH), 261–283 (YPCQFCGKRFHQKSDMKKHTYIH), 289–311 (HKCQVCGKAFSQSSNLITHSRKH), and 317–340 (FSCDLCCKGFQRKVDLRRHRENQH).

The protein resides in the nucleus. Functionally, essential transcriptional regulator necessary for development and differentiation of erythroid and megakaryocytic lineages. Alters histone methylation by recruiting histone methyltransferase to target genes promoters. Plays a role in heterochromatin formation. The chain is Zinc finger protein Gfi-1b (gfi1b) from Xenopus laevis (African clawed frog).